A 287-amino-acid chain; its full sequence is Probable endonuclease LCL3 (287 aa).

The interval 1-40 is disordered; it reads MPWPFGPSGSSEAPPPQKPRDDKVEGREPAKSWNSLLPKP. Residues 18–30 are compositionally biased toward basic and acidic residues; sequence KPRDDKVEGREPA. The helical transmembrane segment at 50–67 threads the bilayer; it reads WAPVFLTAVGSLAAFMFY. One can recognise a TNase-like domain in the interval 88 to 246; that stretch reads RSLLGRVTSV…KAKKLGLWSI (159 aa). Arginine 137 is a catalytic residue. Ca(2+) is bound at residue aspartate 142. Catalysis depends on residues glutamate 145 and arginine 185. The span at 254 to 272 shows a compositional bias: basic and acidic residues; the sequence is PRDFKNRTQGNEKSERDVE. Residues 254–278 are disordered; that stretch reads PRDFKNRTQGNEKSERDVEGSTVQK.

Belongs to the LCL3 family.

It is found in the mitochondrion. The protein resides in the membrane. The chain is Probable endonuclease LCL3 (LCL3) from Verticillium alfalfae (strain VaMs.102 / ATCC MYA-4576 / FGSC 10136) (Verticillium wilt of alfalfa).